Here is a 562-residue protein sequence, read N- to C-terminus: Glucocorticoid modulatory element-binding protein 1 (562 aa).

Alanine 2 is modified (N-acetylalanine). The SAND domain maps to 72 to 156 (ASSIEGNEDM…RKMMDSGQID (85 aa)). Cysteine 103 contacts Zn(2+). Residues lysine 129, lysine 133, lysine 136, and arginine 147 each coordinate DNA. Zn(2+) is bound by residues histidine 160, cysteine 164, and cysteine 168. The stretch at 311–355 (LDNRRKQVEQGEEQFLYTLADLERQLEEQKKQAQDPRLKSQTVQN) forms a coiled coil. The disordered stretch occupies residues 360–384 (PVSTPKPPKRPRLQRPASTTVLSPS). Over residues 375-384 (PASTTVLSPS) the composition is skewed to polar residues.

In terms of assembly, homodimer, and heterodimer of GMEB1 and GMEB2. Interacts with TRIM63. Interacts with the glucocorticoid receptor (NR3C1) and NCOA2/TIF2. May interact with HSP27 and CREB-binding protein (CBP). As to expression, ubiquitous. Low levels were detected in heart, brain, spleen, lung, liver, skeletal muscle, kidney and testis.

The protein resides in the nucleus. It localises to the cytoplasm. Functionally, trans-acting factor that binds to glucocorticoid modulatory elements (GME) present in the TAT (tyrosine aminotransferase) promoter and increases sensitivity to low concentrations of glucocorticoids. Also binds to the transferrin receptor promoter. The polypeptide is Glucocorticoid modulatory element-binding protein 1 (Gmeb1) (Mus musculus (Mouse)).